We begin with the raw amino-acid sequence, 427 residues long: Serine--tRNA ligase (427 aa).

L-serine is bound at residue 231 to 233 (TAE). Residue 262 to 264 (RSE) coordinates ATP. E285 is a binding site for L-serine. 349 to 352 (EISS) is an ATP binding site. Position 385 (S385) interacts with L-serine.

Belongs to the class-II aminoacyl-tRNA synthetase family. Type-1 seryl-tRNA synthetase subfamily. In terms of assembly, homodimer. The tRNA molecule binds across the dimer.

The protein localises to the cytoplasm. The enzyme catalyses tRNA(Ser) + L-serine + ATP = L-seryl-tRNA(Ser) + AMP + diphosphate + H(+). It carries out the reaction tRNA(Sec) + L-serine + ATP = L-seryl-tRNA(Sec) + AMP + diphosphate + H(+). The protein operates within aminoacyl-tRNA biosynthesis; selenocysteinyl-tRNA(Sec) biosynthesis; L-seryl-tRNA(Sec) from L-serine and tRNA(Sec): step 1/1. Functionally, catalyzes the attachment of serine to tRNA(Ser). Is also able to aminoacylate tRNA(Sec) with serine, to form the misacylated tRNA L-seryl-tRNA(Sec), which will be further converted into selenocysteinyl-tRNA(Sec). In Staphylococcus saprophyticus subsp. saprophyticus (strain ATCC 15305 / DSM 20229 / NCIMB 8711 / NCTC 7292 / S-41), this protein is Serine--tRNA ligase.